A 344-amino-acid polypeptide reads, in one-letter code: GDSL esterase/lipase At5g03590 (344 aa).

Positions 1 to 19 (MHYLMKLFFSLSLFFGING) are cleaved as a signal peptide. Residue serine 41 is the Nucleophile of the active site. Residues asparagine 126, asparagine 227, and asparagine 238 are each glycosylated (N-linked (GlcNAc...) asparagine). Aspartate 318 is an active-site residue.

This sequence belongs to the 'GDSL' lipolytic enzyme family.

It localises to the secreted. The sequence is that of GDSL esterase/lipase At5g03590 from Arabidopsis thaliana (Mouse-ear cress).